Consider the following 107-residue polypeptide: Ferredoxin Fdx8 (107 aa).

4Fe-4S ferredoxin-type domains follow at residues 1–31 (MAYV…GPLA) and 50–79 (LQLY…DEDE). The [4Fe-4S] cluster site is built by Cys9, Cys13, Cys17, Cys21, Cys59, Cys62, Cys65, and Cys69.

[4Fe-4S] cluster is required as a cofactor.

Its function is as follows. Ferredoxins are iron-sulfur proteins that transfer electrons in a wide variety of metabolic reactions. Fdx2 can receive electrons from both FdR_A and FdR_B ferredoxin reductases, with a preference for FdR_B compared with FdR_A, and transfer the electrons to the cytochrome P450 CYP260A1. This is Ferredoxin Fdx8 from Sorangium cellulosum (strain So ce56) (Polyangium cellulosum (strain So ce56)).